Here is a 626-residue protein sequence, read N- to C-terminus: FAD-binding monooxygenase moxY (626 aa).

The span at 1-23 shows a compositional bias: low complexity; the sequence is MAPFLSAHGESASSSSSSSPTPS. The disordered stretch occupies residues 1–47; the sequence is MAPFLSAHGESASSSSSSSPTPSRHTRNQHVDYSTPGSTGYNIPQNT. The segment covering 31-47 has biased composition (polar residues); it reads VDYSTPGSTGYNIPQNT. FAD contacts are provided by residues 96 to 99, 108 to 109, and tyrosine 114; these read TWLE and DI. NADP(+) is bound at residue 106–108; sequence GCD. Residues 243–249 and 266–267 each bind NADP(+); these read SGASSIQ and RT.

This sequence belongs to the FAD-binding monooxygenase family. FAD is required as a cofactor.

The protein operates within mycotoxin biosynthesis. In terms of biological role, FAD-binding monooxygenase; part of the fragmented gene cluster that mediates the biosynthesis of dothistromin (DOTH), a polyketide toxin very similar in structure to the aflatoxin precursor, versicolorin B. The first step of the pathway is the conversion of acetate to norsolorinic acid (NOR) and requires the fatty acid synthase subunits hexA and hexB, as well as the polyketide synthase pksA. PksA combines a hexanoyl starter unit and 7 malonyl-CoA extender units to synthesize the precursor NOR. The hexanoyl starter unit is provided to the acyl-carrier protein (ACP) domain by the fungal fatty acid synthase hexA/hexB. The second step is the conversion of NOR to averantin (AVN) and requires the norsolorinic acid ketoreductase nor1, which catalyzes the dehydration of norsolorinic acid to form (1'S)-averantin. The cytochrome P450 monooxygenase avnA then catalyzes the hydroxylation of AVN to 5'hydroxyaverantin (HAVN). The next step is performed by adhA that transforms HAVN to averufin (AVF). Averufin might then be converted to hydroxyversicolorone by cypX and avfA. Hydroxyversicolorone is further converted versiconal hemiacetal acetate (VHA) by moxY. VHA is then the substrate for the versiconal hemiacetal acetate esterase est1 to yield versiconal (VAL). Versicolorin B synthase vbsA then converts VAL to versicolorin B (VERB) by closing the bisfuran ring. Then, the activity of the versicolorin B desaturase verB leads to versicolorin A (VERA). DotB, a predicted chloroperoxidase, may perform epoxidation of the A-ring of VERA. Alternatively, a cytochrome P450, such as cypX or avnA could catalyze this step. It is also possible that another, uncharacterized, cytochrome P450 enzyme is responsible for this step. Opening of the epoxide could potentially be achieved by the epoxide hydrolase epoA. However, epoA seems not to be required for DOTH biosynthesis, but other epoxide hydrolases may have the ability to complement this hydrolysis. Alternatively, opening of the epoxide ring could be achieved non-enzymatically. The next step is the deoxygenation of ring A to yield the 5,8-dihydroxyanthraquinone which is most likely catalyzed by the NADPH dehydrogenase encoded by ver1. The last stages of DOTH biosynthesis are proposed to involve hydroxylation of the bisfuran. OrdB and norB might have oxidative roles here. An alternative possibility is that cytochrome P450 monoogenases such as avnA and cypX might perform these steps in addition to previously proposed steps. This Dothistroma septosporum (Red band needle blight fungus) protein is FAD-binding monooxygenase moxY.